The primary structure comprises 496 residues: Isocitrate dehydrogenase [NADP] (496 aa).

NADP(+) is bound by residues Leu-88 and Thr-90. The D-threo-isocitrate site is built by Ser-98, Asn-100, Arg-104, Arg-114, and Arg-137. Positions 193, 229, and 232 each coordinate NADP(+). Asp-248 contributes to the Mg(2+) binding site. 7 residues coordinate NADP(+): Glu-277, Gly-281, Ser-282, Ala-283, Lys-285, Tyr-286, and Asn-293.

This sequence belongs to the isocitrate and isopropylmalate dehydrogenases family. In terms of assembly, homodimer. Mg(2+) serves as cofactor. Requires Mn(2+) as cofactor.

It carries out the reaction D-threo-isocitrate + NADP(+) = 2-oxoglutarate + CO2 + NADPH. Functionally, catalyzes the oxidative decarboxylation of isocitrate to 2-oxoglutarate and carbon dioxide with the concomitant reduction of NADP(+). The sequence is that of Isocitrate dehydrogenase [NADP] (icd) from Thermus thermophilus (strain ATCC 27634 / DSM 579 / HB8).